Consider the following 701-residue polypeptide: T-cell immunomodulatory protein homolog (701 aa).

Residues 1 to 29 (MVKCGKYVLILELLLLTLLYNLIKRVSNS) form the signal peptide. At 30-657 (GETVSSFVDG…IQLSVNPSNK (628 aa)) the chain is on the extracellular side. Residues Asn-148, Asn-180, Asn-217, Asn-258, Asn-458, Asn-522, and Asn-571 are each glycosylated (N-linked (GlcNAc...) asparagine). A helical transmembrane segment spans residues 658–678 (FYSIIYITLICLSVIGVLIFI). The Cytoplasmic portion of the chain corresponds to 679-701 (LDRKEKIEDSKEEMGFKSHFVIG).

Belongs to the TIP family.

The protein resides in the membrane. Functionally, may protect the parasite against attack by the host immune system by immunomodulation. The sequence is that of T-cell immunomodulatory protein homolog from Plasmodium yoelii yoelii.